Here is a 34-residue protein sequence, read N- to C-terminus: uncharacterized protein (34 aa).

This is an uncharacterized protein from Haemophilus influenzae (strain ATCC 51907 / DSM 11121 / KW20 / Rd).